The chain runs to 1516 residues: AP-4 complex accessory subunit RUSC2 (1516 aa).

Disordered stretches follow at residues 33–105, 202–224, 229–248, 331–351, 404–445, and 478–511; these read AGGG…PFLL, LDEC…SGFS, WKLS…SGDQ, SKMS…GYGC, LSSQ…PSEY, and GQVY…PVRL. The segment covering 66 to 81 has biased composition (polar residues); that stretch reads LFSSLHSTPGGTARSI. Basic and acidic residues predominate over residues 82 to 92; sequence DSTKSRSRDGR. Gly residues predominate over residues 206–217; the sequence is GGPGGSGSGGGA. Residues 333–344 are compositionally biased toward basic and acidic residues; that stretch reads MSYESHHPESGG. Residues 405–420 show a composition bias toward low complexity; the sequence is SSQSSPSPAGSSITSC. Positions 428–440 are enriched in pro residues; sequence SPPPGPGPDPGPS. The segment covering 480–493 has biased composition (polar residues); the sequence is VYTNTSPPNLSTGR. Phosphoserine occurs at positions 536, 543, and 559. Disordered regions lie at residues 550 to 588, 646 to 688, 727 to 836, and 868 to 889; these read GRKK…APLD, LMDP…KEQR, RTQQ…PQKE, and ESLA…ANHL. Over residues 567–579 the composition is skewed to polar residues; sequence GDSSQEFSPIQEA. Ser-656 is subject to Phosphoserine. A compositionally biased stretch (low complexity) spans 729–746; that stretch reads QQPAPLAAPAAQVSVPAP. Ser-781 is modified (phosphoserine). A compositionally biased stretch (low complexity) spans 791 to 801; sequence PSTDSSASTSC. Residues 1031–1175 enclose the RUN domain; that stretch reads NVGHLVLKYL…LPFSLDLLFQ (145 aa). Disordered stretches follow at residues 1210 to 1261, 1286 to 1408, and 1422 to 1449; these read RARG…GRAR, IEGS…LPSD, and QTVG…SSPP. Residues 1219–1230 show a composition bias toward basic and acidic residues; that stretch reads DVDRAAQGERVK. Over residues 1237–1251 the composition is skewed to acidic residues; it reads GGEEEEEEEETEEVA. The segment covering 1355–1364 has biased composition (basic and acidic residues); that stretch reads ELRRSREREG. A phosphoserine mark is found at Ser-1368 and Ser-1380. The span at 1426–1437 shows a compositional bias: basic and acidic residues; sequence SRREPEPKESLQ. One can recognise an SH3 domain in the interval 1447 to 1506; that stretch reads SPPCEVQALCHHLATGPGQLSFHKGDILRVLGRAGGDWLRCSRGPDSGLVPLAYVTLTPT.

In terms of assembly, associated component of the adapter-like complex 4 (AP-4). Interacts with active RAB1A and RAB1B, and with GOLGA2. Interacts (via RUN domain) with RAB35 (GTP-bound form); the interaction recruits RUSC2 to the plasma membrane. In terms of tissue distribution, widely expressed, with highest levels in brain and testis.

It localises to the cytoplasm. The protein localises to the cytosol. Its subcellular location is the cell membrane. Associates with the adapter-like complex 4 (AP-4) and may therefore play a role in vesicular trafficking of proteins at the trans-Golgi network. The sequence is that of AP-4 complex accessory subunit RUSC2 from Homo sapiens (Human).